The chain runs to 416 residues: MPYNFCLPSLSCRTSCSSRPCVPPSCHSCTLPGACNIPANVSNCNWFCEGSFNGSEKETMQFLNDRLASYLEKVRQLERDNAELENLIRERSQQQEPLLCPSYQSYFKTIEELQQKILCTKSENARLVVQIDNAKLAADDFRTKYQTELSLRQLVESDINGLRRILDELTLCKSDLEAQVESLKEELLCLKSNHEQEVNTLRCQLGDRLNVEVDAAPTVDLNRVLNETRSQYEALVETNRREVEQWFTTQTEELNKQVVSSSEQLQSYQAEIIELRRTVNALEIELQAQHNLRDSLENTLTESEARYSSQLSQVQSLITNVESQLAEIRSDLERQNQEYQVLLDVRARLECEINTYRSLLESEDCNLPSNPCATTNACSKPIGPCLSNPCTPCVPPAPCTPCAPRPRCGPCNSFVR.

The segment at 1–56 (MPYNFCLPSLSCRTSCSSRPCVPPSCHSCTLPGACNIPANVSNCNWFCEGSFNGSE) is head. Positions 56–367 (EKETMQFLND…SLLESEDCNL (312 aa)) constitute an IF rod domain. The coil 1A stretch occupies residues 57–91 (KETMQFLNDRLASYLEKVRQLERDNAELENLIRER). The interval 92-102 (SQQQEPLLCPS) is linker 1. Positions 103-203 (YQSYFKTIEE…HEQEVNTLRC (101 aa)) are coil 1B. The linker 12 stretch occupies residues 204 to 219 (QLGDRLNVEVDAAPTV). Residues 220 to 363 (DLNRVLNETR…NTYRSLLESE (144 aa)) form a coil 2 region. Residues 364–416 (DCNLPSNPCATTNACSKPIGPCLSNPCTPCVPPAPCTPCAPRPRCGPCNSFVR) form a tail region.

This sequence belongs to the intermediate filament family.

This chain is Keratin, type I cuticular Ha1 (KRT31), found in Pan troglodytes (Chimpanzee).